Here is a 203-residue protein sequence, read N- to C-terminus: NADH-ubiquinone oxidoreductase chain 6 (203 aa).

The next 5 membrane-spanning stretches (helical) occupy residues 16–36 (SNIL…TIVS), 40–60 (VVSV…LIMI), 70–90 (LLVY…LINI), 102–122 (YIPL…QKII), and 179–199 (WLII…VISI).

Belongs to the complex I subunit 6 family.

The protein localises to the mitochondrion membrane. It catalyses the reaction a ubiquinone + NADH + 5 H(+)(in) = a ubiquinol + NAD(+) + 4 H(+)(out). Core subunit of the mitochondrial membrane respiratory chain NADH dehydrogenase (Complex I) that is believed to belong to the minimal assembly required for catalysis. Complex I functions in the transfer of electrons from NADH to the respiratory chain. The immediate electron acceptor for the enzyme is believed to be ubiquinone. In Trichophyton rubrum (Athlete's foot fungus), this protein is NADH-ubiquinone oxidoreductase chain 6 (ND6).